The chain runs to 48 residues: Palustrin-3b (48 aa).

Cys-43 and Cys-48 form a disulfide bridge.

Expressed by the skin glands.

The protein resides in the secreted. In terms of biological role, antimicrobial activity against Gram-negative bacterium E.coli. This chain is Palustrin-3b, found in Lithobates palustris (Pickerel frog).